The primary structure comprises 457 residues: Fibrinogen C domain-containing protein 1-B (457 aa).

The disordered stretch occupies residues 1-21; the sequence is MGSDRWKNIRGTPQMEDSVQE. Residues 1 to 33 are Cytoplasmic-facing; that stretch reads MGSDRWKNIRGTPQMEDSVQEKSQRKGCGYILC. The chain crosses the membrane as a helical; Signal-anchor for type II membrane protein span at residues 34–54; sequence TVLLSVAVLLAVTVTGAVLFM. The Extracellular segment spans residues 55 to 457; that stretch reads NQYHAPSTEP…MKIRPQREEN (403 aa). One can recognise a Fibrinogen C-terminal domain in the interval 231 to 454; it reads CANGSKPRDC…FTEMKIRPQR (224 aa). A glycan (N-linked (GlcNAc...) asparagine) is linked at N233. A disulfide bridge connects residues C240 and C269. A glycan (N-linked (GlcNAc...) asparagine) is linked at N336. Residues D389 and D391 each coordinate Ca(2+). A disulfide bond links C397 and C410.

In terms of assembly, homotetramer; disulfide-linked.

The protein resides in the membrane. Functionally, acetyl group-binding receptor which shows a calcium-dependent binding to acetylated structures such as chitin, some N-acetylated carbohydrates, and amino acids. This is Fibrinogen C domain-containing protein 1-B (fibcd1-b) from Xenopus laevis (African clawed frog).